Consider the following 300-residue polypeptide: Ribosomal RNA small subunit methyltransferase A (300 aa).

Residues asparagine 36, valine 38, glycine 63, glutamate 84, aspartate 113, and asparagine 131 each contribute to the S-adenosyl-L-methionine site.

Belongs to the class I-like SAM-binding methyltransferase superfamily. rRNA adenine N(6)-methyltransferase family. RsmA subfamily.

It localises to the cytoplasm. It carries out the reaction adenosine(1518)/adenosine(1519) in 16S rRNA + 4 S-adenosyl-L-methionine = N(6)-dimethyladenosine(1518)/N(6)-dimethyladenosine(1519) in 16S rRNA + 4 S-adenosyl-L-homocysteine + 4 H(+). Its function is as follows. Specifically dimethylates two adjacent adenosines (A1518 and A1519) in the loop of a conserved hairpin near the 3'-end of 16S rRNA in the 30S particle. May play a critical role in biogenesis of 30S subunits. The chain is Ribosomal RNA small subunit methyltransferase A from Kineococcus radiotolerans (strain ATCC BAA-149 / DSM 14245 / SRS30216).